A 293-amino-acid chain; its full sequence is Protease HtpX homolog (293 aa).

Helical transmembrane passes span 6–26 and 28–48; these read VAVMLAAMTGLFLAVGYLIGG and SGMVIAFLVAGGMNLFAYWNS. His-130 contacts Zn(2+). Residue Glu-131 is part of the active site. His-134 contacts Zn(2+). The next 2 membrane-spanning stretches (helical) occupy residues 145-165 and 172-192; these read LTATLAGAISMLANFAFFFGG and PLGAVGMIVMMILAPLAAMMV. Glu-201 contributes to the Zn(2+) binding site.

It belongs to the peptidase M48B family. Zn(2+) is required as a cofactor.

It localises to the cell inner membrane. This chain is Protease HtpX homolog, found in Rhodospirillum rubrum (strain ATCC 11170 / ATH 1.1.1 / DSM 467 / LMG 4362 / NCIMB 8255 / S1).